A 739-amino-acid polypeptide reads, in one-letter code: Probable endo-1,3(4)-beta-glucanase An02g00850 (739 aa).

Residues 1-24 (MPTSTLLWSVGSLALSSMVLPAAA) form the signal peptide. The GH16 domain maps to 31 to 283 (ETWKGEDFLT…WAGGVYSTSG (253 aa)). Asparagine 59 and asparagine 74 each carry an N-linked (GlcNAc...) asparagine glycan. The active-site Nucleophile is glutamate 140. The active-site Proton donor is the glutamate 145. N-linked (GlcNAc...) asparagine glycosylation is present at asparagine 396. 3 stretches are compositionally biased toward low complexity: residues 431 to 442 (SEATEASNSEGS), 452 to 499 (TGAS…AGAT), and 507 to 522 (GASG…SAAA). The disordered stretch occupies residues 431–718 (SEATEASNSE…TPSTPVFTGG (288 aa)). Asparagine 459 and asparagine 482 each carry an N-linked (GlcNAc...) asparagine glycan. The span at 523-532 (TPSNVSSTGA) shows a compositional bias: polar residues. N-linked (GlcNAc...) asparagine glycosylation is found at asparagine 526 and asparagine 537. The span at 539–548 (SEDSSASSEA) shows a compositional bias: polar residues. A compositionally biased stretch (low complexity) spans 561-587 (GASAEANGNDSASSNAATASNVSGASA). Residues asparagine 569, asparagine 581, asparagine 592, and asparagine 620 are each glycosylated (N-linked (GlcNAc...) asparagine). Over residues 597–641 (ASAGANAGSSAAPSSVSGASAEANGSEGSSSHSSGSQAGAHSYGS) the composition is skewed to low complexity. Positions 654-673 (PSSSSHAFATAPSSTGSSRV) are enriched in polar residues. Positions 674 to 713 (PTSAAAANNAAAATQGSSASGSNSGSSGHGSSSATTPSTP) are enriched in low complexity. Glycine 717 carries GPI-anchor amidated glycine lipidation. Residues 718–739 (GANKLTLGASSVLSVLAFALLA) constitute a propeptide, removed in mature form.

Belongs to the glycosyl hydrolase 16 family.

The protein localises to the cell membrane. It carries out the reaction Endohydrolysis of (1-&gt;3)- or (1-&gt;4)-linkages in beta-D-glucans when the glucose residue whose reducing group is involved in the linkage to be hydrolyzed is itself substituted at C-3.. In terms of biological role, mixed-linked glucanase involved in the degradation of complex natural cellulosic substrates. This Aspergillus niger (strain ATCC MYA-4892 / CBS 513.88 / FGSC A1513) protein is Probable endo-1,3(4)-beta-glucanase An02g00850.